Reading from the N-terminus, the 190-residue chain is Cathelicidin-3 (190 aa).

An N-terminal signal peptide occupies residues 1–29 (METQMASPSLGRCSLWLLLLGLLLPSASA). Glutamine 30 carries the post-translational modification Pyrrolidone carboxylic acid. Residues 30-130 (QALSYREAVL…DLNCNELQSV (101 aa)) constitute a propeptide that is removed on maturation. 2 cysteine pairs are disulfide-bonded: cysteine 85/cysteine 96 and cysteine 107/cysteine 124. Basic residues predominate over residues 133–151 (LRPRRPRLPRPRPRPRPRP). Residues 133–190 (LRPRRPRLPRPRPRPRPRPRSLPLPRPQPRRIPRPILLPWRPPRPIPRPQPQPIPRWL) are disordered. The span at 172–190 (WRPPRPIPRPQPQPIPRWL) shows a compositional bias: pro residues.

It belongs to the cathelicidin family.

The protein localises to the secreted. Exerts, in vitro, a potent antimicrobial activity. Probably due to an impairment of the function of the respiratory chain and of energy-dependent activities in the inner membrane of susceptible microorganisms. In Ovis aries (Sheep), this protein is Cathelicidin-3 (CATHL3).